The chain runs to 219 residues: Mediator of RNA polymerase II transcription subunit 21 (219 aa).

Residues 86–125 (SAEEQLHKIDSLQKKLVDIEDEKIHAIKKKDDLLKQVDDL) are a coiled coil. The disordered stretch occupies residues 141–219 (SLAPENVQED…ISESISPGKI (79 aa)). Composition is skewed to basic and acidic residues over residues 166 to 181 (IEQKIANEKIESKIEG) and 191 to 204 (SDSKSADSELFMDK). Positions 210 to 219 (ISESISPGKI) are enriched in polar residues.

Belongs to the Mediator complex subunit 21 family. In terms of assembly, component of the Mediator complex.

It localises to the nucleus. Its function is as follows. Component of the Mediator complex, a coactivator involved in the regulated transcription of nearly all RNA polymerase II-dependent genes. Mediator functions as a bridge to convey information from gene-specific regulatory proteins to the basal RNA polymerase II transcription machinery. Mediator is recruited to promoters by direct interactions with regulatory proteins and serves as a scaffold for the assembly of a functional preinitiation complex with RNA polymerase II and the general transcription factors. This Candida glabrata (strain ATCC 2001 / BCRC 20586 / JCM 3761 / NBRC 0622 / NRRL Y-65 / CBS 138) (Yeast) protein is Mediator of RNA polymerase II transcription subunit 21 (SRB7).